The primary structure comprises 123 residues: Small ribosomal subunit protein uS12 (123 aa).

The segment at 1–24 (MPTINQLIRKERKKQVKKSKSPAL) is disordered. Positions 10–20 (KERKKQVKKSK) are enriched in basic residues. Asp89 bears the 3-methylthioaspartic acid mark.

It belongs to the universal ribosomal protein uS12 family. Part of the 30S ribosomal subunit. Contacts proteins S8 and S17. May interact with IF1 in the 30S initiation complex.

Functionally, with S4 and S5 plays an important role in translational accuracy. In terms of biological role, interacts with and stabilizes bases of the 16S rRNA that are involved in tRNA selection in the A site and with the mRNA backbone. Located at the interface of the 30S and 50S subunits, it traverses the body of the 30S subunit contacting proteins on the other side and probably holding the rRNA structure together. The combined cluster of proteins S8, S12 and S17 appears to hold together the shoulder and platform of the 30S subunit. The polypeptide is Small ribosomal subunit protein uS12 (Sulfurovum sp. (strain NBC37-1)).